We begin with the raw amino-acid sequence, 447 residues long: Glutamate--tRNA ligase 1 (447 aa).

The short motif at 10–20 (PSPTGMLHVGN) is the 'HIGH' region element. The short motif at 240 to 244 (KISKR) is the 'KMSKS' region element. K243 provides a ligand contact to ATP.

Belongs to the class-I aminoacyl-tRNA synthetase family. Glutamate--tRNA ligase type 1 subfamily. As to quaternary structure, monomer.

The protein resides in the cytoplasm. It catalyses the reaction tRNA(Glu) + L-glutamate + ATP = L-glutamyl-tRNA(Glu) + AMP + diphosphate. Its function is as follows. Catalyzes the attachment of glutamate to tRNA(Glu) in a two-step reaction: glutamate is first activated by ATP to form Glu-AMP and then transferred to the acceptor end of tRNA(Glu). In Rickettsia conorii (strain ATCC VR-613 / Malish 7), this protein is Glutamate--tRNA ligase 1.